A 908-amino-acid polypeptide reads, in one-letter code: MGVNDLWQILEPVKQHIPLRNLGGKTIAVDLSLWVCEAQTVKKMMGSVMKPHLRNLFFRISYLTQMDVKLVFVMEGEPPKLKADVISKRNQSRYGSSGKSWSQKTGRSHFKSVLRECLHMLECLGIPWVQAAGEAEAMCAYLNAGGHVDGCLTNDGDTFLYGAQTVYRNFTMNTKDPHVDCYTMSSIKSKLGLDRDALVGLAILLGCDYLPKGVPGVGKEQALKLIQILKGQSLLQRFNRWNETSCNSSPQLLVTKKLAHCSVCSHPGSPKDHERNGCRLCKSDKYCEPHDYEYCCPCEWHRTEHDRQLSEVENNIKKKACCCEGFPFHEVIQEFLLNKDKLVKVIRYQRPDLLLFQRFTLEKMEWPNHYACEKLLVLLTHYDMIERKLGSRNSNQLQPIRIVKTRIRNGVHCFEIEWEKPEHYAMEDKQHGEFALLTIEEESLFEAAYPEIVAVYQKQKLEIKGKKQKRIKPKENNLPEPDEVMSFQSHMTLKPTCEIFHKQNSKLNSGISPDPTLPQESISASLNSLLLPKNTPCLNAQEQFMSSLRPLAIQQIKAVSKSLISESSQPNTSSHNISVIADLHLSTIDWEGTSFSNSPAIQRNTFSHDLKSEVESELSAIPDGFENIPEQLSCESERYTANIKKVLDEDSDGISPEEHLLSGITDLCLQDLPLKERIFTKLSYPQDNLQPDVNLKTLSILSVKESCIANSGSDCTSHLSKDLPGIPLQNESRDSKILKGDQLLQEDYKVNTSVPYSVSNTVVKTCNVRPPNTALDHSRKVDMQTTRKILMKKSVCLDRHSSDEQSAPVFGKAKYTTQRMKHSSQKHNSSHFKESGHNKLSSPKIHIKETEQCVRSYETAENEESCFPDSTKSSLSSLQCHKKENNSGTCLDSPLPLRQRLKLRFQST.

Residues 2 to 96 are XPG-N domain; sequence GVNDLWQILE…SKRNQSRYGS (95 aa). Mg(2+) is bound by residues Asp30, Glu75, Glu134, Glu136, Asp155, Asp157, and Asp208. The segment at 122–208 is XPG-I domain; it reads ECLGIPWVQA…VGLAILLGCD (87 aa). Residues 208–384 are 5'-3' exonuclease domain; it reads DYLPKGVPGV…LLVLLTHYDM (177 aa). The interval 390–464 is chromodomain; it reads GSRNSNQLQP…VYQKQKLEIK (75 aa). Phosphoserine occurs at positions 801 and 802.

It belongs to the XPG/RAD2 endonuclease family. GEN subfamily. As to quaternary structure, largely monomeric, dimerizes on the Holliday junction and the first nick occurs upon dimerization at the junction. It depends on Mg(2+) as a cofactor.

The protein resides in the nucleus. Its function is as follows. Endonuclease which resolves Holliday junctions (HJs) by the introduction of symmetrically related cuts across the junction point, to produce nicked duplex products in which the nicks can be readily ligated. Four-way DNA intermediates, also known as Holliday junctions, are formed during homologous recombination and DNA repair, and their resolution is necessary for proper chromosome segregation. Cleaves HJs by a nick and counter-nick mechanism involving dual coordinated incisions that lead to the formation of ligatable nicked duplex products. Cleavage of the first strand is rate limiting, while second strand cleavage is rapid. Largely monomeric, dimerizes on the HJ and the first nick occurs upon dimerization at the junction. Efficiently cleaves both single and double HJs contained within large recombination intermediates. Exhibits a weak sequence preference for incision between two G residues that reside in a T-rich region of DNA. Also has endonuclease activity on 5'-flap and replication fork (RF) DNA substrates. This is Flap endonuclease GEN homolog 1 (GEN1) from Homo sapiens (Human).